Here is a 528-residue protein sequence, read N- to C-terminus: Na(+)/H(+) antiporter NhaB (528 aa).

11 consecutive transmembrane segments (helical) span residues 29 to 49, 52 to 72, 95 to 115, 139 to 159, 203 to 223, 248 to 268, 304 to 324, 349 to 369, 390 to 410, 448 to 468, and 476 to 496; these read LIIN…LLVI, IFTL…LLAI, VLLL…LLLF, AFLS…AVAV, LLMH…VGEP, VPVF…KIFG, AFIG…VGLI, EEAL…AVII, LVIF…VFVG, ATPN…APLI, and VWMA…AIEL.

This sequence belongs to the NhaB Na(+)/H(+) (TC 2.A.34) antiporter family.

The protein localises to the cell inner membrane. The enzyme catalyses 2 Na(+)(in) + 3 H(+)(out) = 2 Na(+)(out) + 3 H(+)(in). Functionally, na(+)/H(+) antiporter that extrudes sodium in exchange for external protons. The chain is Na(+)/H(+) antiporter NhaB from Shewanella woodyi (strain ATCC 51908 / MS32).